A 61-amino-acid polypeptide reads, in one-letter code: Small ribosomal subunit protein uS14 (61 aa).

The Zn(2+) site is built by Cys24, Cys27, Cys40, and Cys43.

Belongs to the universal ribosomal protein uS14 family. Zinc-binding uS14 subfamily. Part of the 30S ribosomal subunit. Contacts proteins S3 and S10. The cofactor is Zn(2+).

Its function is as follows. Binds 16S rRNA, required for the assembly of 30S particles and may also be responsible for determining the conformation of the 16S rRNA at the A site. This is Small ribosomal subunit protein uS14 from Geobacter metallireducens (strain ATCC 53774 / DSM 7210 / GS-15).